We begin with the raw amino-acid sequence, 176 residues long: Putative Ras-related protein RABA4e (176 aa).

The protein belongs to the small GTPase superfamily. Rab family.

In Arabidopsis thaliana (Mouse-ear cress), this protein is Putative Ras-related protein RABA4e (RABA4E).